We begin with the raw amino-acid sequence, 260 residues long: Cell division protein FtsQ (260 aa).

Topologically, residues 1–26 are cytoplasmic; it reads MINKVLLEGQRITRSPQVKQHACGAS. Residues 27–47 form a helical membrane-spanning segment; that stretch reads FFLVVLLLIGGLLYSTISWMW. Residues 48-260 lie on the Periplasmic side of the membrane; sequence DEQRLPLSKL…QELTQEKNDD (213 aa). Residues 52–122 enclose the POTRA domain; sequence LPLSKLVLQG…DTIKVYLTEY (71 aa).

This sequence belongs to the FtsQ/DivIB family. FtsQ subfamily. In terms of assembly, part of a complex composed of FtsB, FtsL and FtsQ.

It is found in the cell inner membrane. Essential cell division protein. May link together the upstream cell division proteins, which are predominantly cytoplasmic, with the downstream cell division proteins, which are predominantly periplasmic. May control correct divisome assembly. The sequence is that of Cell division protein FtsQ from Vibrio cholerae serotype O1 (strain ATCC 39315 / El Tor Inaba N16961).